A 286-amino-acid chain; its full sequence is D-tagatose-1,6-bisphosphate aldolase subunit KbaY (286 aa).

D82 (proton donor) is an active-site residue. Residues H83 and H180 each coordinate Zn(2+). G181 is a binding site for dihydroxyacetone phosphate. Residue H208 coordinates Zn(2+). Residues 209–211 (GAS) and 230–233 (NVAT) contribute to the dihydroxyacetone phosphate site.

Belongs to the class II fructose-bisphosphate aldolase family. TagBP aldolase KbaY subfamily. Homotetramer. Forms a complex with KbaZ. Requires Zn(2+) as cofactor.

It carries out the reaction D-tagatofuranose 1,6-bisphosphate = D-glyceraldehyde 3-phosphate + dihydroxyacetone phosphate. It participates in carbohydrate metabolism; D-tagatose 6-phosphate degradation; D-glyceraldehyde 3-phosphate and glycerone phosphate from D-tagatose 6-phosphate: step 2/2. Functionally, catalytic subunit of the tagatose-1,6-bisphosphate aldolase KbaYZ, which catalyzes the reversible aldol condensation of dihydroxyacetone phosphate (DHAP or glycerone-phosphate) with glyceraldehyde 3-phosphate (G3P) to produce tagatose 1,6-bisphosphate (TBP). Requires KbaZ subunit for full activity and stability. Is involved in the catabolism of N-acetylgalactosamine and D-galactosamine. This is D-tagatose-1,6-bisphosphate aldolase subunit KbaY (kbaY) from Escherichia coli.